A 351-amino-acid polypeptide reads, in one-letter code: F-box protein At1g70590 (351 aa).

Residues 1–60 form a disordered region; the sequence is MKQRTWPCRSEGSRFSSLSFLKPHDKDKRSRISSINKATAKSTTSSRSSSSSSSSRPPSN. Residues 32–41 show a composition bias toward polar residues; sequence ISSINKATAK. Positions 42–59 are enriched in low complexity; sequence STTSSRSSSSSSSSRPPS. An F-box domain is found at 62 to 111; the sequence is FGDFSMLPYDILMKIAAPFSHPNLQAASLVCKSWRDALKPLRESMLLIRW. The stretch at 105 to 141 is one Sel1-like repeat; that stretch reads SMLLIRWGKKYKHGRGGVRANLDKALDSFLKGAMRGS. A TPR repeat occupies 142–175; it reads TLAMVDAGLVYWERGEKEKAVNLYRRASELGDAV.

The polypeptide is F-box protein At1g70590 (Arabidopsis thaliana (Mouse-ear cress)).